The sequence spans 394 residues: Phosphoglycerate kinase (394 aa).

Substrate-binding positions include 21–23, arginine 36, 59–62, arginine 118, and arginine 151; these read DFN and HLGR. Position 183 is a phosphoserine (serine 183). Lysine 201 contributes to the ATP binding site. Threonine 299 is subject to Phosphothreonine. ATP contacts are provided by residues glutamate 323 and 350–353; that span reads GGDS.

It belongs to the phosphoglycerate kinase family. As to quaternary structure, monomer.

It localises to the cytoplasm. The enzyme catalyses (2R)-3-phosphoglycerate + ATP = (2R)-3-phospho-glyceroyl phosphate + ADP. Its pathway is carbohydrate degradation; glycolysis; pyruvate from D-glyceraldehyde 3-phosphate: step 2/5. The chain is Phosphoglycerate kinase from Halalkalibacterium halodurans (strain ATCC BAA-125 / DSM 18197 / FERM 7344 / JCM 9153 / C-125) (Bacillus halodurans).